Here is a 489-residue protein sequence, read N- to C-terminus: Aspartate/glutamate permease AcaP (489 aa).

Helical transmembrane passes span 6 to 26 (IRWFTVAFIAFNMVWGMGNVV), 36 to 56 (VVTSWLLILALYFIPYALIVG), 91 to 111 (VVHIPYLAQKPQAILIAFGWV), 122 to 142 (MSMTAVALISLAIFLAFLWLS), 152 to 172 (IGGLAGTAMFVMSLLFIVMAI), 195 to 215 (IPKFDFSYFTTISMLVFAVGG), 238 to 258 (FLLAGMVGICAVLGSIAMGMI), 290 to 310 (LMIVYALTNGVGQIAALAFSI), 342 to 362 (GYTLTGILVSIIILLPLLGIG), 373 to 393 (NLNSVVMPMRYLWVFFAFIML), 413 to 433 (AMIAGAWCFLFTLIACVLGMV), and 449 to 469 (LASNILTPIVLILLGMLLPFI).

Belongs to the amino acid-polyamine-organocation (APC) superfamily. Glutamate:GABA antiporter (GGA) (TC 2.A.3.7) family.

The protein localises to the cell membrane. In terms of biological role, involved in aspartate and glutamate uptake. Plays no significant role in the excretion of accumulated glutamate. The polypeptide is Aspartate/glutamate permease AcaP (Lactococcus lactis subsp. cremoris (strain MG1363)).